The primary structure comprises 509 residues: Cruciferin CRU1 (509 aa).

The signal sequence occupies residues Met-1–Ala-23. Residues Cys-37 and Cys-70 are joined by a disulfide bond. The Cupin type-1 1 domain occupies Leu-42–Gln-271. A phosphoserine mark is found at Ser-53 and Ser-97. Cysteines 113 and 326 form a disulfide. Position 116 is a phosphothreonine (Thr-116). 3 disordered regions span residues Asp-119 to Asp-175, Arg-230 to Asn-249, and Tyr-301 to Leu-321. Residues Gln-124–Gly-172 show a composition bias toward low complexity. Positions Glu-332–Arg-481 constitute a Cupin type-1 2 domain. Ser-352 is subject to Phosphoserine. Residues Thr-445 and Thr-487 each carry the phosphothreonine modification.

It belongs to the 11S seed storage protein (globulins) family. In terms of assembly, hexamer; each subunit is composed of an acidic and a basic chain derived from a single precursor and linked by a disulfide bond.

Its function is as follows. This is a seed storage protein. The protein is Cruciferin CRU1 (CRU1) of Brassica napus (Rape).